Here is a 380-residue protein sequence, read N- to C-terminus: Polygalacturonase 2 (380 aa).

The signal sequence occupies residues methionine 1–alanine 20. The propeptide occupies leucine 21–arginine 38. Cysteine 42 and cysteine 60 are oxidised to a cystine. 2 PbH1 repeats span residues alanine 173–serine 204 and serine 205–serine 226. The Proton donor role is filled by aspartate 219. An intrachain disulfide couples cysteine 221 to cysteine 237. Histidine 241 is an active-site residue. PbH1 repeat units lie at residues valine 256–threonine 277, valine 285–glutamine 307, and threonine 319–glycine 364. The N-linked (GlcNAc...) asparagine glycan is linked to asparagine 287. 2 cysteine pairs are disulfide-bonded: cysteine 347–cysteine 352 and cysteine 371–cysteine 380.

It belongs to the glycosyl hydrolase 28 family.

Its subcellular location is the secreted. It carries out the reaction (1,4-alpha-D-galacturonosyl)n+m + H2O = (1,4-alpha-D-galacturonosyl)n + (1,4-alpha-D-galacturonosyl)m.. This Penicillium olsonii protein is Polygalacturonase 2 (PG2).